Here is a 234-residue protein sequence, read N- to C-terminus: Enolase-phosphatase E1 (234 aa).

Residues 212–234 (RPGNYPQPQHSHFKISSFEGLNP) form a disordered region.

Belongs to the HAD-like hydrolase superfamily. MasA/MtnC family. In terms of assembly, monomer. Mg(2+) is required as a cofactor.

It catalyses the reaction 5-methylsulfanyl-2,3-dioxopentyl phosphate + H2O = 1,2-dihydroxy-5-(methylsulfanyl)pent-1-en-3-one + phosphate. It functions in the pathway amino-acid biosynthesis; L-methionine biosynthesis via salvage pathway; L-methionine from S-methyl-5-thio-alpha-D-ribose 1-phosphate: step 3/6. The protein operates within amino-acid biosynthesis; L-methionine biosynthesis via salvage pathway; L-methionine from S-methyl-5-thio-alpha-D-ribose 1-phosphate: step 4/6. Bifunctional enzyme that catalyzes the enolization of 2,3-diketo-5-methylthiopentyl-1-phosphate (DK-MTP-1-P) into the intermediate 2-hydroxy-3-keto-5-methylthiopentenyl-1-phosphate (HK-MTPenyl-1-P), which is then dephosphorylated to form the acireductone 1,2-dihydroxy-3-keto-5-methylthiopentene (DHK-MTPene). This chain is Enolase-phosphatase E1, found in Leptospira interrogans serogroup Icterohaemorrhagiae serovar copenhageni (strain Fiocruz L1-130).